Reading from the N-terminus, the 53-residue chain is Light-harvesting protein B-800/820 alpha chain (53 aa).

Topologically, residues 1–14 (MNQGKIWTVVNPAV) are cytoplasmic. A helical transmembrane segment spans residues 15 to 35 (GLPLLLGSVAITALLVHLAVL). Histidine 31 contacts a bacteriochlorophyll. At 36–53 (THTTWFPAFTQGGLKKAA) the chain is on the periplasmic side.

Belongs to the antenna complex alpha subunit family. As to quaternary structure, the core complex is formed by different alpha and beta chains, binding bacteriochlorophyll molecules, and arranged most probably in tetrameric structures disposed around the reaction center. The non-pigmented gamma chains may constitute additional components.

It is found in the cell inner membrane. Its function is as follows. Antenna complexes are light-harvesting systems, which transfer the excitation energy to the reaction centers. In Rhodoblastus acidophilus (Rhodopseudomonas acidophila), this protein is Light-harvesting protein B-800/820 alpha chain.